The primary structure comprises 85 residues: Senescence-associated and QQS-related protein (85 aa).

Positions 1–24 are enriched in basic and acidic residues; sequence MSFRKVEKKPTEMGRNMTHEKSDS. 2 disordered regions span residues 1 to 35 and 55 to 85; these read MSFRKVEKKPTEMGRNMTHEKSDSDSDNEGAPMTV and SGKARSNYNLTGTAKGTGPINSFSRKHFPNY. The span at 58 to 77 shows a compositional bias: polar residues; that stretch reads ARSNYNLTGTAKGTGPINSF.

As to expression, expressed predominantly within leaves and cotyledons vasculatures. Mainly observed in fully expanded leaves, at the base of mature inflorescences, in senescing leaves and cauline leaves, and, to a lower extent, in hypocotyls and rosette leaves prior to flowering.

Its function is as follows. Plays a role in carbon allocation, including during senescence and stresses, thus impacting starch accumulation. This is Senescence-associated and QQS-related protein from Arabidopsis thaliana (Mouse-ear cress).